The following is a 419-amino-acid chain: MGESFLLLQPASPALSPTPSSLLLGPTITMRADVLIAALATGALVAAVPTSPKKPTPPKGDVSNPFVGKTQFVNPEWSNKLTQTYKSFLKKGDVKNAFRTLQAQKVSTFVWVSRLSELSRIDEAIATARRVQKTTGKKQIVGLVLYNLPDRDCSAGESAGELLSGENGFERYKEEFVKPYAQKVAAAKDLEFAIVLEPDSLGNLVTNLNIPLCAGAVDTYRDGIAHAITQLQQDHVHLYIDAAHGGWLGWNDNLPLAADEFAEVLKRADEASGKKNKIRGFATNVSNYNPLHAVVRENYTEWSNSWDESHYASSLAPHLEERGLPAHFIVDQGRVANPGARKEWGEWCNVAPSGFGPAPSTNTNNTVVDAIVWIKPGGESDGECGYFNAPRAGHWHDEFAQQLVQNAHPSVYENWWKFW.

The signal sequence occupies residues 1-47 (MGESFLLLQPASPALSPTPSSLLLGPTITMRADVLIAALATGALVAA). Substrate-binding residues include Trp-111 and Ser-113. Catalysis depends on proton donor residues Asp-152 and Asp-199. A substrate-binding site is contributed by Trp-247. Asn-284 carries an N-linked (GlcNAc...) asparagine glycan. Asn-287 serves as a coordination point for substrate. Asn-298 carries N-linked (GlcNAc...) asparagine glycosylation. Trp-347 is a substrate binding site. The N-linked (GlcNAc...) asparagine glycan is linked to Asn-364. Residues Lys-375 and Glu-379 each coordinate substrate.

Belongs to the glycosyl hydrolase 6 (cellulase B) family. In terms of processing, both N- and O-glycosylated.

The protein resides in the secreted. It carries out the reaction Hydrolysis of (1-&gt;4)-beta-D-glucosidic linkages in cellulose and cellotetraose, releasing cellobiose from the non-reducing ends of the chains.. In terms of biological role, exoglucanase that plays an important function in biomass degradation by catalyzing the hydrolysis of the non-reducing end beta-1,4-glucosidic linkages in cellulose and cellotetraose to release cellobiose. Hydrolyzes crystalline and amorphous cellulose but is inactive on hydroxyethyl cellulose, mannan, galactomannan, xyloglucan, arabinoxylan, arabinan, xylan, and pectin. This Podospora anserina (strain S / ATCC MYA-4624 / DSM 980 / FGSC 10383) (Pleurage anserina) protein is 1,4-beta-D-glucan cellobiohydrolase CEL6B.